The sequence spans 462 residues: Putative amidase AmiB2 (462 aa).

Residues lysine 81 and serine 155 each act as charge relay system in the active site. The active-site Acyl-ester intermediate is serine 179.

It belongs to the amidase family.

It catalyses the reaction a monocarboxylic acid amide + H2O = a monocarboxylate + NH4(+). This is Putative amidase AmiB2 (amiB2) from Mycobacterium bovis (strain ATCC BAA-935 / AF2122/97).